The primary structure comprises 138 residues: uncharacterized protein (138 aa).

3 consecutive transmembrane segments (helical) span residues 8-28 (LIIQ…AFLP), 47-67 (FIIC…TIIV), and 82-102 (TLPV…IAFI).

This sequence to U.parvum UU007, UU008 and UU041.

It is found in the cell membrane. This is an uncharacterized protein from Ureaplasma parvum serovar 3 (strain ATCC 700970).